The sequence spans 109 residues: uncharacterized protein (109 aa).

Residues 67–96 (YFGNKLWRPTPRSGQSGQSRPKTGPHGSQR) form a disordered region. The span at 78 to 87 (RSGQSGQSRP) shows a compositional bias: polar residues.

This is an uncharacterized protein from Saccharomyces cerevisiae (strain ATCC 204508 / S288c) (Baker's yeast).